A 308-amino-acid chain; its full sequence is uncharacterized protein (308 aa).

The N-terminal stretch at 1–17 is a signal peptide; that stretch reads MKSLALLLSLLINFSIG. N-linked (GlcNAc...) asparagine glycans are attached at residues Asn13, Asn91, Asn159, and Asn210. The disordered stretch occupies residues 213–308; that stretch reads DEISGGTGAG…HDNYISSFCT (96 aa). Gly residues-rich tracts occupy residues 217–231 and 239–252; these read GGTG…GSGS and SDGG…GSGS. Residues 267-284 are compositionally biased toward low complexity; that stretch reads NKNNNKNKNNNNNNNNYN.

The protein localises to the secreted. This is an uncharacterized protein from Dictyostelium discoideum (Social amoeba).